The sequence spans 115 residues: NADH-ubiquinone oxidoreductase chain 3 (115 aa).

3 helical membrane passes run Phe-3–Trp-23, Phe-55–Leu-75, and Leu-84–Tyr-104.

The protein belongs to the complex I subunit 3 family. Core subunit of respiratory chain NADH dehydrogenase (Complex I) which is composed of 45 different subunits. Interacts with TMEM186. Interacts with TMEM242.

It is found in the mitochondrion inner membrane. It carries out the reaction a ubiquinone + NADH + 5 H(+)(in) = a ubiquinol + NAD(+) + 4 H(+)(out). In terms of biological role, core subunit of the mitochondrial membrane respiratory chain NADH dehydrogenase (Complex I) which catalyzes electron transfer from NADH through the respiratory chain, using ubiquinone as an electron acceptor. Essential for the catalytic activity of complex I. This Gorilla gorilla gorilla (Western lowland gorilla) protein is NADH-ubiquinone oxidoreductase chain 3.